A 726-amino-acid polypeptide reads, in one-letter code: Catalase-peroxidase (726 aa).

Residues 90–213 (WHAAGTYRIG…LAAVQMGLIY (124 aa)) constitute a cross-link (tryptophyl-tyrosyl-methioninium (Trp-Tyr) (with M-239)). His91 acts as the Proton acceptor in catalysis. The segment at residues 213–239 (YVNPEGPNGNPDPLAAARDIRETFARM) is a cross-link (tryptophyl-tyrosyl-methioninium (Tyr-Met) (with W-90)). Residue His254 coordinates heme b. Residues 334 to 359 (AHQWKPKHGAGANTVPDAHDPSKRHA) are disordered.

It belongs to the peroxidase family. Peroxidase/catalase subfamily. As to quaternary structure, homodimer or homotetramer. Requires heme b as cofactor. Formation of the three residue Trp-Tyr-Met cross-link is important for the catalase, but not the peroxidase activity of the enzyme.

It catalyses the reaction H2O2 + AH2 = A + 2 H2O. It carries out the reaction 2 H2O2 = O2 + 2 H2O. Bifunctional enzyme with both catalase and broad-spectrum peroxidase activity. This is Catalase-peroxidase from Bradyrhizobium sp. (strain BTAi1 / ATCC BAA-1182).